A 430-amino-acid polypeptide reads, in one-letter code: Histidine--tRNA ligase (430 aa).

It belongs to the class-II aminoacyl-tRNA synthetase family. As to quaternary structure, homodimer.

It localises to the cytoplasm. The enzyme catalyses tRNA(His) + L-histidine + ATP = L-histidyl-tRNA(His) + AMP + diphosphate + H(+). In Acinetobacter baylyi (strain ATCC 33305 / BD413 / ADP1), this protein is Histidine--tRNA ligase.